The sequence spans 454 residues: tRNA modification GTPase MnmE (454 aa).

The (6S)-5-formyl-5,6,7,8-tetrahydrofolate site is built by R23, E80, and K120. In terms of domain architecture, TrmE-type G spans 216-377 (GMKVVIAGRP…LRNHLKQSMG (162 aa)). K(+) is bound at residue N226. Residues 226–231 (NAGKSS), 245–251 (TDIAGTT), 270–273 (DTAG), 335–338 (NKAD), and 358–360 (SAR) each bind GTP. Residue S230 coordinates Mg(2+). K(+)-binding residues include T245, I247, and T250. Mg(2+) is bound at residue T251. K454 is a binding site for (6S)-5-formyl-5,6,7,8-tetrahydrofolate.

Belongs to the TRAFAC class TrmE-Era-EngA-EngB-Septin-like GTPase superfamily. TrmE GTPase family. Homodimer. Heterotetramer of two MnmE and two MnmG subunits. It depends on K(+) as a cofactor.

The protein resides in the cytoplasm. In terms of biological role, exhibits a very high intrinsic GTPase hydrolysis rate. Involved in the addition of a carboxymethylaminomethyl (cmnm) group at the wobble position (U34) of certain tRNAs, forming tRNA-cmnm(5)s(2)U34. This is tRNA modification GTPase MnmE from Salmonella arizonae (strain ATCC BAA-731 / CDC346-86 / RSK2980).